Here is a 205-residue protein sequence, read N- to C-terminus: Photosystem I assembly protein Ycf4 (205 aa).

2 helical membrane-spanning segments follow: residues 23 to 43 (WATV…SSYI) and 86 to 106 (LMCF…CLIF).

Belongs to the Ycf4 family.

It localises to the plastid. The protein resides in the chloroplast thylakoid membrane. Seems to be required for the assembly of the photosystem I complex. The sequence is that of Photosystem I assembly protein Ycf4 from Tetradesmus obliquus (Green alga).